The primary structure comprises 289 residues: Formamidopyrimidine-DNA glycosylase (289 aa).

Pro2 serves as the catalytic Schiff-base intermediate with DNA. Residue Glu3 is the Proton donor of the active site. The active-site Proton donor; for beta-elimination activity is Lys61. Residues His96, Arg115, and Lys161 each coordinate DNA. The segment at 247–281 (SAYGQENLPCPRCGAPIKREKFMNRSSFSCPRCQP) adopts an FPG-type zinc-finger fold. Catalysis depends on Arg271, which acts as the Proton donor; for delta-elimination activity.

This sequence belongs to the FPG family. As to quaternary structure, monomer. It depends on Zn(2+) as a cofactor.

It catalyses the reaction Hydrolysis of DNA containing ring-opened 7-methylguanine residues, releasing 2,6-diamino-4-hydroxy-5-(N-methyl)formamidopyrimidine.. The enzyme catalyses 2'-deoxyribonucleotide-(2'-deoxyribose 5'-phosphate)-2'-deoxyribonucleotide-DNA = a 3'-end 2'-deoxyribonucleotide-(2,3-dehydro-2,3-deoxyribose 5'-phosphate)-DNA + a 5'-end 5'-phospho-2'-deoxyribonucleoside-DNA + H(+). Involved in base excision repair of DNA damaged by oxidation or by mutagenic agents. Acts as a DNA glycosylase that recognizes and removes damaged bases. Has a preference for oxidized purines, such as 7,8-dihydro-8-oxoguanine (8-oxoG). Has AP (apurinic/apyrimidinic) lyase activity and introduces nicks in the DNA strand. Cleaves the DNA backbone by beta-delta elimination to generate a single-strand break at the site of the removed base with both 3'- and 5'-phosphates. This chain is Formamidopyrimidine-DNA glycosylase, found in Rhodococcus erythropolis (strain PR4 / NBRC 100887).